Reading from the N-terminus, the 255-residue chain is 3-deoxy-manno-octulosonate cytidylyltransferase (255 aa).

It belongs to the KdsB family.

It is found in the cytoplasm. The catalysed reaction is 3-deoxy-alpha-D-manno-oct-2-ulosonate + CTP = CMP-3-deoxy-beta-D-manno-octulosonate + diphosphate. It participates in nucleotide-sugar biosynthesis; CMP-3-deoxy-D-manno-octulosonate biosynthesis; CMP-3-deoxy-D-manno-octulosonate from 3-deoxy-D-manno-octulosonate and CTP: step 1/1. Its pathway is bacterial outer membrane biogenesis; lipopolysaccharide biosynthesis. Activates KDO (a required 8-carbon sugar) for incorporation into bacterial lipopolysaccharide in Gram-negative bacteria. The chain is 3-deoxy-manno-octulosonate cytidylyltransferase from Cellvibrio japonicus (strain Ueda107) (Pseudomonas fluorescens subsp. cellulosa).